Consider the following 545-residue polypeptide: CTP synthase (545 aa).

The segment at 1-266 (MATNYIFVTG…DDFVCERFRL (266 aa)) is amidoligase domain. Position 14 (serine 14) interacts with CTP. Serine 14 is a binding site for UTP. Residues 15-20 (SLGKGI) and aspartate 72 contribute to the ATP site. 2 residues coordinate Mg(2+): aspartate 72 and glutamate 140. Residues 147-149 (DIE), 187-192 (KTKPTQ), and lysine 223 each bind CTP. UTP contacts are provided by residues 187–192 (KTKPTQ) and lysine 223. 239-241 (KDV) contacts ATP. Positions 291-542 (TIGMVGKYTE…VKAAYENHKK (252 aa)) constitute a Glutamine amidotransferase type-1 domain. Glycine 352 contacts L-glutamine. The active-site Nucleophile; for glutamine hydrolysis is cysteine 379. L-glutamine contacts are provided by residues 380-383 (LGMQ), glutamate 403, and arginine 470. Residues histidine 515 and glutamate 517 contribute to the active site.

This sequence belongs to the CTP synthase family. As to quaternary structure, homotetramer.

The enzyme catalyses UTP + L-glutamine + ATP + H2O = CTP + L-glutamate + ADP + phosphate + 2 H(+). The catalysed reaction is L-glutamine + H2O = L-glutamate + NH4(+). It carries out the reaction UTP + NH4(+) + ATP = CTP + ADP + phosphate + 2 H(+). The protein operates within pyrimidine metabolism; CTP biosynthesis via de novo pathway; CTP from UDP: step 2/2. Its activity is regulated as follows. Allosterically activated by GTP, when glutamine is the substrate; GTP has no effect on the reaction when ammonia is the substrate. The allosteric effector GTP functions by stabilizing the protein conformation that binds the tetrahedral intermediate(s) formed during glutamine hydrolysis. Inhibited by the product CTP, via allosteric rather than competitive inhibition. In terms of biological role, catalyzes the ATP-dependent amination of UTP to CTP with either L-glutamine or ammonia as the source of nitrogen. Regulates intracellular CTP levels through interactions with the four ribonucleotide triphosphates. The sequence is that of CTP synthase from Haemophilus influenzae (strain PittEE).